A 242-amino-acid polypeptide reads, in one-letter code: Murein peptide amidase A (242 aa).

The 234-residue stretch at 1-234 folds into the Peptidase M14 domain; the sequence is MTVTRPRAER…FAMANLLRWH (234 aa). Zn(2+) is bound by residues His-49, Glu-52, and His-157. The active-site Proton donor/acceptor is Glu-210.

The protein belongs to the peptidase M14 family. In terms of assembly, homodimer. Zn(2+) is required as a cofactor.

It localises to the cytoplasm. It carries out the reaction L-alanyl-gamma-D-glutamyl-meso-2,6-diaminopimelate + H2O = L-alanyl-D-glutamate + meso-2,6-diaminopimelate. It participates in cell wall degradation; peptidoglycan degradation. Functionally, involved in muropeptide degradation. Catalyzes the hydrolysis of the gamma-D-glutamyl-diaminopimelic acid (gamma-D-Glu-Dap) amide bond in the murein tripeptide L-alanyl-gamma-D-glutamyl-meso-diaminopimelic acid, leading to the formation of L-Ala-gamma-D-Glu and Dap. The protein is Murein peptide amidase A of Escherichia coli O157:H7.